The sequence spans 62 residues: Potassium channel toxin kappa-KTx 3.3 (62 aa).

A signal peptide spans 1–26 (MKSTLMTASLLILVLLSIVDYASVYA). Positions 27 to 36 (ELIDSEISME) are excised as a propeptide. Intrachain disulfides connect cysteine 43-cysteine 61 and cysteine 47-cysteine 57.

It belongs to the short scorpion toxin superfamily. Potassium channel inhibitor kappa-KTx family. Kappa-KTx 3 subfamily. As to expression, expressed by the venom gland.

The protein resides in the secreted. Potassium channel inhibitor (Kv). In Heterometrus petersii (Asian forest scorpion), this protein is Potassium channel toxin kappa-KTx 3.3.